Reading from the N-terminus, the 835-residue chain is Ribonucleoside-diphosphate reductase large subunit (835 aa).

Substrate is bound by residues Ser-222, 237–238, Gly-266, 447–451, and 660–664; these read SC, NLCCE, and PSASS. Residues Cys-238 and Cys-464 are joined by a disulfide bond. Catalysis depends on Asn-447, which acts as the Proton acceptor. Cys-449 (cysteine radical intermediate) is an active-site residue. Glu-451 functions as the Proton acceptor in the catalytic mechanism.

This sequence belongs to the ribonucleoside diphosphate reductase large chain family. As to quaternary structure, heterotetramer composed of a homodimer of the large subunit (R1) and a homodimer of the small subunit (R2). Larger multisubunit protein complex are also active, composed of (R1)n(R2)n.

It catalyses the reaction a 2'-deoxyribonucleoside 5'-diphosphate + [thioredoxin]-disulfide + H2O = a ribonucleoside 5'-diphosphate + [thioredoxin]-dithiol. Ribonucleoside-diphosphate reductase holoenzyme provides the precursors necessary for viral DNA synthesis. Allows virus growth in non-dividing cells. Catalyzes the biosynthesis of deoxyribonucleotides from the corresponding ribonucleotides. This is Ribonucleoside-diphosphate reductase large subunit from Magallana gigas (Pacific oyster).